A 320-amino-acid polypeptide reads, in one-letter code: MPTGDFDSKPSWADQVEEEGEDDKCVTSELLKGIPLATGDTSLEPELLPGAPLPPPKEVINGNIKTVTEYRIDEDGKKFKIVRTFRIETRKASKAVARRKNWKKFGNSEFDPPGPNVATTTVSDDVSMTFITSKEDLNCQEEEDPMNKLKGQKIVSCRICKGDHWTTRCPYKDTLGPMQKELAEQLGLSTGEKEKLPGELEPVQATQNKTGKYVPPSLRDGASRRGESMQPNRRADDNATIRVTNLSEDTRETDLQELFRPFGSISRIYLAKDKTTGQSKGFAFISFHRREDAARAIAGVSGFGYDHLILNVEWAKPSTN.

The tract at residues 1–25 is disordered; sequence MPTGDFDSKPSWADQVEEEGEDDKC. A phosphoserine mark is found at S8 and S11. T38 and T41 each carry phosphothreonine. A phosphoserine mark is found at S42, S189, S223, and S264. The interval 209 to 234 is disordered; it reads KTGKYVPPSLRDGASRRGESMQPNRR. Over residues 221–234 the composition is skewed to basic and acidic residues; sequence GASRRGESMQPNRR. In terms of domain architecture, RRM spans 239–317; sequence ATIRVTNLSE…LILNVEWAKP (79 aa).

This sequence belongs to the eIF-3 subunit G family. In terms of assembly, component of the eukaryotic translation initiation factor 3 (eIF-3) complex, which is composed of 13 subunits: EIF3A, EIF3B, EIF3C, EIF3D, EIF3E, EIF3F, EIF3G, EIF3H, EIF3I, EIF3J, EIF3K, EIF3L and EIF3M. The eIF-3 complex appears to include 3 stable modules: module A is composed of EIF3A, EIF3B, EIF3G and EIF3I; module B is composed of EIF3F, EIF3H, and EIF3M; and module C is composed of EIF3C, EIF3D, EIF3E, EIF3K and EIF3L. EIF3C of module C binds EIF3B of module A and EIF3H of module B, thereby linking the three modules. EIF3J is a labile subunit that binds to the eIF-3 complex via EIF3B. The eIF-3 complex interacts with RPS6KB1 under conditions of nutrient depletion. Mitogenic stimulation leads to binding and activation of a complex composed of FRAP1 and RAPTOR, leading to phosphorylation and release of RPS6KB1 and binding of EIF4B to eIF-3. Interacts (via C-terminus) with AIFM1 (via N-terminus). Interacts with DHX33; the interaction is independent of RNA. Phosphorylated. Phosphorylation is enhanced upon serum stimulation.

It is found in the cytoplasm. Its subcellular location is the nucleus. The protein resides in the perinuclear region. RNA-binding component of the eukaryotic translation initiation factor 3 (eIF-3) complex, which is required for several steps in the initiation of protein synthesis. The eIF-3 complex associates with the 40S ribosome and facilitates the recruitment of eIF-1, eIF-1A, eIF-2:GTP:methionyl-tRNAi and eIF-5 to form the 43S pre-initiation complex (43S PIC). The eIF-3 complex stimulates mRNA recruitment to the 43S PIC and scanning of the mRNA for AUG recognition. The eIF-3 complex is also required for disassembly and recycling of post-termination ribosomal complexes and subsequently prevents premature joining of the 40S and 60S ribosomal subunits prior to initiation. The eIF-3 complex specifically targets and initiates translation of a subset of mRNAs involved in cell proliferation, including cell cycling, differentiation and apoptosis, and uses different modes of RNA stem-loop binding to exert either translational activation or repression. This subunit can bind 18S rRNA. This is Eukaryotic translation initiation factor 3 subunit G from Bos taurus (Bovine).